Reading from the N-terminus, the 353-residue chain is Homeobox protein Mohawk (353 aa).

The segment covering 18–27 has biased composition (basic and acidic residues); that stretch reads RGTPDRERGS. The tract at residues 18 to 50 is disordered; it reads RGTPDRERGSRTFSGFLDNPHTGPEVGIPDGPP. The homeobox; TALE-type DNA-binding region spans 71–132; sequence VRHKRQALQD…NARRRLKNTV (62 aa). Disordered stretches follow at residues 157-183 and 243-302; these read LSVSSDGDSCSEDGENPPRNHMNEEGY and MGKT…PSKD.

The protein belongs to the TALE/IRO homeobox family.

Its subcellular location is the nucleus. Functionally, may act as a morphogenetic regulator of cell adhesion. Participates in the early events that lead to differentiation. The polypeptide is Homeobox protein Mohawk (Mkx) (Mus musculus (Mouse)).